We begin with the raw amino-acid sequence, 125 residues long: Protein ApaG (125 aa).

Residues 1 to 125 enclose the ApaG domain; the sequence is MINSPRVCIQ…FRLAVPTLIH (125 aa).

In Salmonella arizonae (strain ATCC BAA-731 / CDC346-86 / RSK2980), this protein is Protein ApaG.